The primary structure comprises 75 residues: Acyl carrier protein (75 aa).

The 75-residue stretch at 1–75 folds into the Carrier domain; sequence MALFDDVKEV…GDAIKFIENV (75 aa). An O-(pantetheine 4'-phosphoryl)serine modification is found at Ser36.

It belongs to the acyl carrier protein (ACP) family. 4'-phosphopantetheine is transferred from CoA to a specific serine of apo-ACP by AcpS. This modification is essential for activity because fatty acids are bound in thioester linkage to the sulfhydryl of the prosthetic group.

It is found in the cytoplasm. The protein operates within lipid metabolism; fatty acid biosynthesis. In terms of biological role, carrier of the growing fatty acid chain in fatty acid biosynthesis. The chain is Acyl carrier protein from Sulfurovum sp. (strain NBC37-1).